A 320-amino-acid polypeptide reads, in one-letter code: Beta-sarcoglycan (320 aa).

Positions 1–10 (MAAAAAAAAA) are enriched in low complexity. A disordered region spans residues 1–34 (MAAAAAAAAATEQQGSNGPVKKSMREKAVERRNV). Residues 1-67 (MAAAAAAAAA…GLRGRKGNLA (67 aa)) lie on the Cytoplasmic side of the membrane. The segment covering 23–34 (SMREKAVERRNV) has biased composition (basic and acidic residues). The helical; Signal-anchor for type II membrane protein transmembrane segment at 68–88 (ICVIVLLFILAVINLLITLVI) threads the bilayer. The Extracellular segment spans residues 89–320 (WAVIRIGPNG…VSDNPCGNTH (232 aa)). 3 N-linked (GlcNAc...) asparagine glycosylation sites follow: asparagine 160, asparagine 213, and asparagine 260. Disulfide bonds link cysteine 290/cysteine 316 and cysteine 292/cysteine 309.

This sequence belongs to the sarcoglycan beta/delta/gamma/zeta family. As to quaternary structure, cross-link to form 2 major subcomplexes: one consisting of SGCB, SGCD and SGCG and the other consisting of SGCB and SGCD. The association between SGCB and SGCG is particularly strong while SGCA is loosely associated with the other sarcoglycans. Post-translationally, disulfide bonds are present. Most strongly expressed in skeletal and heart muscle. Also detected in proliferating myoblasts.

Its subcellular location is the cell membrane. It localises to the sarcolemma. The protein resides in the cytoplasm. The protein localises to the cytoskeleton. Functionally, component of the sarcoglycan complex, a subcomplex of the dystrophin-glycoprotein complex which forms a link between the F-actin cytoskeleton and the extracellular matrix. The polypeptide is Beta-sarcoglycan (Sgcb) (Mus musculus (Mouse)).